The primary structure comprises 142 residues: Transcriptional regulator MraZ (142 aa).

2 consecutive SpoVT-AbrB domains span residues 5-51 and 77-120; these read ASAL…PRPE and AMDV…DSQT.

It belongs to the MraZ family. As to quaternary structure, forms oligomers.

The protein resides in the cytoplasm. The protein localises to the nucleoid. The chain is Transcriptional regulator MraZ from Burkholderia multivorans (strain ATCC 17616 / 249).